The primary structure comprises 963 residues: Bifunctional glutamine synthetase adenylyltransferase/adenylyl-removing enzyme (963 aa).

The tract at residues 1–451 (MAAPSELQLY…EHFADIIAER (451 aa)) is adenylyl removase. The tract at residues 461–963 (TIEWKALWAG…VAFWEKVFAE (503 aa)) is adenylyl transferase.

This sequence belongs to the GlnE family. It depends on Mg(2+) as a cofactor.

It carries out the reaction [glutamine synthetase]-O(4)-(5'-adenylyl)-L-tyrosine + phosphate = [glutamine synthetase]-L-tyrosine + ADP. The enzyme catalyses [glutamine synthetase]-L-tyrosine + ATP = [glutamine synthetase]-O(4)-(5'-adenylyl)-L-tyrosine + diphosphate. In terms of biological role, involved in the regulation of glutamine synthetase GlnA, a key enzyme in the process to assimilate ammonia. When cellular nitrogen levels are high, the C-terminal adenylyl transferase (AT) inactivates GlnA by covalent transfer of an adenylyl group from ATP to specific tyrosine residue of GlnA, thus reducing its activity. Conversely, when nitrogen levels are low, the N-terminal adenylyl removase (AR) activates GlnA by removing the adenylyl group by phosphorolysis, increasing its activity. The regulatory region of GlnE binds the signal transduction protein PII (GlnB) which indicates the nitrogen status of the cell. This Hahella chejuensis (strain KCTC 2396) protein is Bifunctional glutamine synthetase adenylyltransferase/adenylyl-removing enzyme.